Reading from the N-terminus, the 399-residue chain is Phosphoglycerate kinase (399 aa).

Substrate is bound by residues 24–26 (DYN), arginine 39, 62–65 (HLGR), arginine 121, and arginine 154. ATP-binding positions include lysine 204, glycine 295, glutamate 326, and 355-358 (GGDS).

This sequence belongs to the phosphoglycerate kinase family. Monomer.

It is found in the cytoplasm. The catalysed reaction is (2R)-3-phosphoglycerate + ATP = (2R)-3-phospho-glyceroyl phosphate + ADP. Its pathway is carbohydrate degradation; glycolysis; pyruvate from D-glyceraldehyde 3-phosphate: step 2/5. This is Phosphoglycerate kinase from Elusimicrobium minutum (strain Pei191).